Here is a 248-residue protein sequence, read N- to C-terminus: Probable transcriptional regulatory protein MYPE8020 (248 aa).

It belongs to the TACO1 family.

It is found in the cytoplasm. This chain is Probable transcriptional regulatory protein MYPE8020, found in Malacoplasma penetrans (strain HF-2) (Mycoplasma penetrans).